The primary structure comprises 251 residues: Flap endonuclease Xni (251 aa).

A Mg(2+)-binding site is contributed by aspartate 104. The region spanning 160–250 (VLPRQLPDYW…SGNLQQLRLK (91 aa)) is the 5'-3' exonuclease domain. K(+) contacts are provided by leucine 171, alanine 172, proline 180, valine 182, and valine 185. Residues 184-189 (GVGAKT) form an interaction with DNA region.

The protein belongs to the Xni family. Requires Mg(2+) as cofactor. K(+) is required as a cofactor.

Functionally, has flap endonuclease activity. During DNA replication, flap endonucleases cleave the 5'-overhanging flap structure that is generated by displacement synthesis when DNA polymerase encounters the 5'-end of a downstream Okazaki fragment. This Yersinia pseudotuberculosis serotype I (strain IP32953) protein is Flap endonuclease Xni.